A 224-amino-acid polypeptide reads, in one-letter code: 2-C-methyl-D-erythritol 4-phosphate cytidylyltransferase (224 aa).

This sequence belongs to the IspD/TarI cytidylyltransferase family. IspD subfamily.

The catalysed reaction is 2-C-methyl-D-erythritol 4-phosphate + CTP + H(+) = 4-CDP-2-C-methyl-D-erythritol + diphosphate. It participates in isoprenoid biosynthesis; isopentenyl diphosphate biosynthesis via DXP pathway; isopentenyl diphosphate from 1-deoxy-D-xylulose 5-phosphate: step 2/6. Catalyzes the formation of 4-diphosphocytidyl-2-C-methyl-D-erythritol from CTP and 2-C-methyl-D-erythritol 4-phosphate (MEP). This Caldicellulosiruptor saccharolyticus (strain ATCC 43494 / DSM 8903 / Tp8T 6331) protein is 2-C-methyl-D-erythritol 4-phosphate cytidylyltransferase.